Reading from the N-terminus, the 1069-residue chain is Receptor-type guanylate cyclase gcy-29 (1069 aa).

Residues methionine 1 to serine 23 form the signal peptide. Residues aspartate 24–glutamine 458 lie on the Extracellular side of the membrane. Residues asparagine 161, asparagine 240, and asparagine 407 are each glycosylated (N-linked (GlcNAc...) asparagine). The helical transmembrane segment at threonine 459–leucine 479 threads the bilayer. At arginine 480 to phenylalanine 1069 the chain is on the cytoplasmic side. The 310-residue stretch at arginine 497–leucine 806 folds into the Protein kinase domain. Residues leucine 503–valine 511 and lysine 527 contribute to the ATP site. The region spanning threonine 876–glutamate 1006 is the Guanylate cyclase domain. Mg(2+) is bound by residues aspartate 881, isoleucine 882, and aspartate 925.

Belongs to the adenylyl cyclase class-4/guanylyl cyclase family. In terms of tissue distribution, expressed bilaterally in ASE and AFD sensory neurons.

It is found in the cell membrane. The enzyme catalyses GTP = 3',5'-cyclic GMP + diphosphate. Functionally, guanylate cyclase involved in the production of the second messenger cGMP. The polypeptide is Receptor-type guanylate cyclase gcy-29 (Caenorhabditis elegans).